Here is a 363-residue protein sequence, read N- to C-terminus: UDP-N-acetylglucosamine--N-acetylmuramyl-(pentapeptide) pyrophosphoryl-undecaprenol N-acetylglucosamine transferase (363 aa).

Residues threonine 14–glycine 16, asparagine 122, arginine 163, serine 190, and glutamine 285 each bind UDP-N-acetyl-alpha-D-glucosamine.

The protein belongs to the glycosyltransferase 28 family. MurG subfamily.

It localises to the cell inner membrane. The catalysed reaction is di-trans,octa-cis-undecaprenyl diphospho-N-acetyl-alpha-D-muramoyl-L-alanyl-D-glutamyl-meso-2,6-diaminopimeloyl-D-alanyl-D-alanine + UDP-N-acetyl-alpha-D-glucosamine = di-trans,octa-cis-undecaprenyl diphospho-[N-acetyl-alpha-D-glucosaminyl-(1-&gt;4)]-N-acetyl-alpha-D-muramoyl-L-alanyl-D-glutamyl-meso-2,6-diaminopimeloyl-D-alanyl-D-alanine + UDP + H(+). It functions in the pathway cell wall biogenesis; peptidoglycan biosynthesis. In terms of biological role, cell wall formation. Catalyzes the transfer of a GlcNAc subunit on undecaprenyl-pyrophosphoryl-MurNAc-pentapeptide (lipid intermediate I) to form undecaprenyl-pyrophosphoryl-MurNAc-(pentapeptide)GlcNAc (lipid intermediate II). This is UDP-N-acetylglucosamine--N-acetylmuramyl-(pentapeptide) pyrophosphoryl-undecaprenol N-acetylglucosamine transferase from Prochlorococcus marinus (strain AS9601).